Reading from the N-terminus, the 135-residue chain is ATP synthase epsilon chain (135 aa).

This sequence belongs to the ATPase epsilon chain family. In terms of assembly, F-type ATPases have 2 components, CF(1) - the catalytic core - and CF(0) - the membrane proton channel. CF(1) has five subunits: alpha(3), beta(3), gamma(1), delta(1), epsilon(1). CF(0) has three main subunits: a, b and c.

Its subcellular location is the cell inner membrane. Produces ATP from ADP in the presence of a proton gradient across the membrane. The polypeptide is ATP synthase epsilon chain (Rhodopseudomonas palustris (strain HaA2)).